Reading from the N-terminus, the 223-residue chain is Translation initiation factor 6 (223 aa).

Belongs to the eIF-6 family.

Its function is as follows. Binds to the 50S ribosomal subunit and prevents its association with the 30S ribosomal subunit to form the 70S initiation complex. This chain is Translation initiation factor 6, found in Methanobrevibacter smithii (strain ATCC 35061 / DSM 861 / OCM 144 / PS).